The sequence spans 702 residues: Elongation factor G (702 aa).

Positions 8 to 286 constitute a tr-type G domain; sequence DKVRNIGIIA…AVVEYLPSPL (279 aa). GTP is bound by residues 17–24, 85–89, and 139–142; these read AHIDAGKT, DTPGH, and NKMD.

This sequence belongs to the TRAFAC class translation factor GTPase superfamily. Classic translation factor GTPase family. EF-G/EF-2 subfamily.

It localises to the cytoplasm. Functionally, catalyzes the GTP-dependent ribosomal translocation step during translation elongation. During this step, the ribosome changes from the pre-translocational (PRE) to the post-translocational (POST) state as the newly formed A-site-bound peptidyl-tRNA and P-site-bound deacylated tRNA move to the P and E sites, respectively. Catalyzes the coordinated movement of the two tRNA molecules, the mRNA and conformational changes in the ribosome. This chain is Elongation factor G, found in Chloroflexus aggregans (strain MD-66 / DSM 9485).